Consider the following 1357-residue polypeptide: DNA-directed RNA polymerase subunit beta (1357 aa).

It belongs to the RNA polymerase beta chain family. As to quaternary structure, the RNAP catalytic core consists of 2 alpha, 1 beta, 1 beta' and 1 omega subunit. When a sigma factor is associated with the core the holoenzyme is formed, which can initiate transcription.

The enzyme catalyses RNA(n) + a ribonucleoside 5'-triphosphate = RNA(n+1) + diphosphate. In terms of biological role, DNA-dependent RNA polymerase catalyzes the transcription of DNA into RNA using the four ribonucleoside triphosphates as substrates. The chain is DNA-directed RNA polymerase subunit beta from Pseudomonas aeruginosa (strain UCBPP-PA14).